The following is a 369-amino-acid chain: Putative agmatine deiminase (369 aa).

Cys355 (amidino-cysteine intermediate) is an active-site residue.

This sequence belongs to the agmatine deiminase family.

The catalysed reaction is agmatine + H2O = N-carbamoylputrescine + NH4(+). This chain is Putative agmatine deiminase, found in Marinomonas sp. (strain MWYL1).